Here is a 166-residue protein sequence, read N- to C-terminus: Endoribonuclease YbeY (166 aa).

Histidine 129, histidine 133, and histidine 139 together coordinate Zn(2+).

The protein belongs to the endoribonuclease YbeY family. Zn(2+) serves as cofactor.

The protein localises to the cytoplasm. Its function is as follows. Single strand-specific metallo-endoribonuclease involved in late-stage 70S ribosome quality control and in maturation of the 3' terminus of the 16S rRNA. This Heliobacterium modesticaldum (strain ATCC 51547 / Ice1) protein is Endoribonuclease YbeY.